The sequence spans 404 residues: MKLPIYLDYSATTPVDPRVAEKMMQCLTLDGTFGNPASRSHRFGWQAEEAVDIARNQIAELVGADPREIVFTSGATEADNLAIKGAANFYQKKGKHIITSKTEHKAVLDTCRQLEREGFDVTYLAPQRNGIIDLVELEAAMREDTILVSIMHVNNEIGVVQDIAAIGEMCRSRGIVFHVDATQSVGKLPIDLSQLKVDLMSFSGHKIYGPKGIGALYVRRKPRIRLEAQMHGGGHERGMRSGTLPVHQIVGMGEAYRIAKEEMTAEMDRLSMLRDRLWNGINDIEEVYLNGDIEQGVPNILNVSFNYVEGESLIMALKDLAVSSGSACTSASLEPSYVLRALGMNDELAHSSIRFSLGRFTTEEEIDYTIELVRKSIGRLRDLSPLWEMFKQGVDISSIEWAHH.

Pyridoxal 5'-phosphate contacts are provided by residues 75–76 (AT), Asn155, Gln183, and 203–205 (SGH). Lys206 bears the N6-(pyridoxal phosphate)lysine mark. A pyridoxal 5'-phosphate-binding site is contributed by Thr243. Residue Cys328 is the Cysteine persulfide intermediate of the active site. Residue Cys328 participates in [2Fe-2S] cluster binding.

This sequence belongs to the class-V pyridoxal-phosphate-dependent aminotransferase family. NifS/IscS subfamily. In terms of assembly, homodimer. Forms a heterotetramer with IscU, interacts with other sulfur acceptors. Pyridoxal 5'-phosphate serves as cofactor.

It is found in the cytoplasm. It catalyses the reaction (sulfur carrier)-H + L-cysteine = (sulfur carrier)-SH + L-alanine. It functions in the pathway cofactor biosynthesis; iron-sulfur cluster biosynthesis. Its function is as follows. Master enzyme that delivers sulfur to a number of partners involved in Fe-S cluster assembly, tRNA modification or cofactor biosynthesis. Catalyzes the removal of elemental sulfur atoms from cysteine to produce alanine. Functions as a sulfur delivery protein for Fe-S cluster synthesis onto IscU, an Fe-S scaffold assembly protein, as well as other S acceptor proteins. The protein is Cysteine desulfurase IscS of Pectobacterium atrosepticum (strain SCRI 1043 / ATCC BAA-672) (Erwinia carotovora subsp. atroseptica).